The following is a 395-amino-acid chain: Renin (395 aa).

The first 21 residues, Met-1 to Ala-21, serve as a signal peptide directing secretion. Residues Leu-22–Lys-43 constitute a propeptide, activation peptide. Asn-64 is a glycosylation site (N-linked (GlcNAc...) asparagine). One can recognise a Peptidase A1 domain in the interval Tyr-79–Ala-392. Asp-97 is a catalytic residue. 2 cysteine pairs are disulfide-bonded: Cys-110–Cys-117 and Cys-274–Cys-278. Asp-283 is a catalytic residue. Cys-316 and Cys-351 are oxidised to a cystine.

This sequence belongs to the peptidase A1 family. In terms of processing, N-glycosylated. In terms of tissue distribution, expressed by the venom gland (at protein level).

The protein localises to the secreted. The catalysed reaction is Cleavage of Leu-|-Xaa bond in angiotensinogen to generate angiotensin I.. With respect to regulation, inhibited completely by aspartyl protease inhibitor pepstatin A, but not by the serine- or metalloproteinase inhibitors PMSF or EDTA. Renin is a highly specific endopeptidase, whose only known function is to generate angiotensin I from angiotensinogen in the plasma, initiating a cascade of reactions that produce an elevation of blood pressure and increased sodium retention by the kidney. This protein is also found in snake venom and shown to specifically cleave human and porcine angiotensinogen into angiotensin I. It does not have general protease activity, no cleavage of alpha or beta casein. May be directly responsible for elevation of blood pressure in the victims of envenomation. In Echis ocellatus (Ocellated saw-scaled viper), this protein is Renin.